A 2839-amino-acid polypeptide reads, in one-letter code: PDZ domain-containing protein 2 (2839 aa).

In terms of domain architecture, PDZ 1 spans 85 to 182 (LSFGNIPVFG…LIMLRRFKHK (98 aa)). Residues 185 to 318 (STYNGNSSNS…RFSKGGKTDF (134 aa)) form a disordered region. The segment covering 189–202 (GNSSNSSEPGETPT) has biased composition (low complexity). The span at 280 to 296 (HLERSEVDRGTEHRIPK) shows a compositional bias: basic and acidic residues. The region spanning 334–419 (KMELLKESDG…MVQLVVASKE (86 aa)) is the PDZ 2 domain. Residues 437–447 (TSSVEDVSSWT) show a composition bias toward polar residues. The segment at 437–501 (TSSVEDVSSW…PKQGSNKIKL (65 aa)) is disordered. Over residues 448 to 461 (DNEDQEADGEEDEG) the composition is skewed to acidic residues. A Phosphoserine modification is found at serine 568. The region spanning 586 to 672 (IIGLYKEKGK…GLFVLTVRTK (87 aa)) is the PDZ 3 domain. The span at 678-697 (LTPCSTPTHMSRSASPNFNT) shows a compositional bias: polar residues. The disordered stretch occupies residues 678-723 (LTPCSTPTHMSRSASPNFNTSGGASAGGSDEGSSSSLGRKTPGPKD). The region spanning 728–813 (EVTLNKEPRV…GPVRLVIGRH (86 aa)) is the PDZ 4 domain. Polar residues-rich tracts occupy residues 832 to 843 (YQESKEANSSPG) and 894 to 908 (GCST…PSTS). Disordered regions lie at residues 832-852 (YQES…KSPS) and 879-921 (DFMV…ANSL). Serine 944 and serine 948 each carry phosphoserine. 14 disordered regions span residues 984 to 1033 (SLPG…ISAP), 1062 to 1155 (SAEA…PCDL), 1216 to 1493 (KAAS…GAPA), 1530 to 1620 (FHED…LPTQ), 1638 to 1712 (PRES…SPLS), 1809 to 1865 (NQGT…DLSK), 1892 to 1976 (GKAK…SVSD), 2009 to 2079 (PDRG…GNIM), 2135 to 2166 (QVAE…SMAK), 2178 to 2211 (IRKA…GEDH), 2232 to 2251 (HFGR…DSQV), 2353 to 2383 (AKSG…GSLG), 2426 to 2481 (SRQN…SRSK), and 2516 to 2564 (ITPR…GEAA). Residues 1012–1022 (MDVHNQEERPR) show a composition bias toward basic and acidic residues. Polar residues-rich tracts occupy residues 1092–1111 (RTDT…QQKS), 1138–1147 (SGSQTVNLTG), 1221–1236 (LGQQ…SDLI), 1250–1269 (SKTS…SQPA), 1305–1315 (TRSASETSTPH), 1384–1401 (SVSS…PSTD), and 1440–1453 (RSPS…GSQE). The segment covering 1662 to 1672 (SSQPSSLLEMS) has biased composition (low complexity). Residues 1698 to 1711 (EVTSASSAMENSPL) are compositionally biased toward polar residues. Phosphoserine is present on serine 1850. The span at 1919–1931 (SPQTSHKTLSKAV) shows a compositional bias: polar residues. Over residues 1936 to 1945 (HVADHEDPDR) the composition is skewed to basic and acidic residues. A compositionally biased stretch (low complexity) spans 2139–2152 (SSTSHPSSLPSHAS). Residues 2370–2383 (GRRSSGSIVSGSLG) are compositionally biased toward low complexity. Composition is skewed to polar residues over residues 2426 to 2437 (SRQNPPETSSKG), 2470 to 2480 (RHTQPSPVSRS), and 2546 to 2559 (PKTS…SASD). One can recognise a PDZ 5 domain in the interval 2622–2706 (FIVLNRKEGS…HKDALVVIKK (85 aa)). The interval 2709-2729 (DQPRPSARQEPPTANGKGLLS) is disordered. The 86-residue stretch at 2750–2835 (CVEVLKTSAG…GPVQLLIRKH (86 aa)) folds into the PDZ 6 domain.

As to quaternary structure, interacts with SCN10A, CTNND2 and PKP4. A secreted form is produced by caspase-mediated proteolytic cleavage. Isoform 2 is expressed (at protein level) in prostate and many prostate tumors.

It is found in the nucleus. The protein localises to the cytoplasm. It localises to the endoplasmic reticulum. Its subcellular location is the secreted. The polypeptide is PDZ domain-containing protein 2 (PDZD2) (Homo sapiens (Human)).